Here is a 516-residue protein sequence, read N- to C-terminus: D-alanine--D-alanyl carrier protein ligase (516 aa).

Position 156–157 (156–157) interacts with ATP; that stretch reads TS. Position 203 (Asp203) interacts with D-alanine. Position 298 to 303 (298 to 303) interacts with ATP; that stretch reads NAYGPT. Residue Val307 coordinates D-alanine. ATP contacts are provided by residues Asp389, 401 to 404, and Lys503; that span reads YGGR. Lys503 contributes to the D-alanine binding site.

Belongs to the ATP-dependent AMP-binding enzyme family. DltA subfamily.

It is found in the cytoplasm. It catalyses the reaction holo-[D-alanyl-carrier protein] + D-alanine + ATP = D-alanyl-[D-alanyl-carrier protein] + AMP + diphosphate. The protein operates within cell wall biogenesis; lipoteichoic acid biosynthesis. Catalyzes the first step in the D-alanylation of lipoteichoic acid (LTA), the activation of D-alanine and its transfer onto the D-alanyl carrier protein (Dcp) DltC. In an ATP-dependent two-step reaction, forms a high energy D-alanyl-AMP intermediate, followed by transfer of the D-alanyl residue as a thiol ester to the phosphopantheinyl prosthetic group of the Dcp. D-alanylation of LTA plays an important role in modulating the properties of the cell wall in Gram-positive bacteria, influencing the net charge of the cell wall. This is D-alanine--D-alanyl carrier protein ligase from Streptococcus pneumoniae (strain ATCC 700669 / Spain 23F-1).